Here is a 245-residue protein sequence, read N- to C-terminus: Malonyl-[acyl-carrier protein] O-methyltransferase (245 aa).

It belongs to the methyltransferase superfamily.

The enzyme catalyses malonyl-[ACP] + S-adenosyl-L-methionine = malonyl-[ACP] methyl ester + S-adenosyl-L-homocysteine. Its pathway is cofactor biosynthesis; biotin biosynthesis. Its function is as follows. Converts the free carboxyl group of a malonyl-thioester to its methyl ester by transfer of a methyl group from S-adenosyl-L-methionine (SAM). It allows to synthesize pimeloyl-ACP via the fatty acid synthetic pathway. This chain is Malonyl-[acyl-carrier protein] O-methyltransferase, found in Calditerrivibrio nitroreducens (strain DSM 19672 / NBRC 101217 / Yu37-1).